A 231-amino-acid chain; its full sequence is 2-C-methyl-D-erythritol 4-phosphate cytidylyltransferase (231 aa).

The protein belongs to the IspD/TarI cytidylyltransferase family. IspD subfamily.

The enzyme catalyses 2-C-methyl-D-erythritol 4-phosphate + CTP + H(+) = 4-CDP-2-C-methyl-D-erythritol + diphosphate. The protein operates within isoprenoid biosynthesis; isopentenyl diphosphate biosynthesis via DXP pathway; isopentenyl diphosphate from 1-deoxy-D-xylulose 5-phosphate: step 2/6. Catalyzes the formation of 4-diphosphocytidyl-2-C-methyl-D-erythritol from CTP and 2-C-methyl-D-erythritol 4-phosphate (MEP). The protein is 2-C-methyl-D-erythritol 4-phosphate cytidylyltransferase of Shewanella piezotolerans (strain WP3 / JCM 13877).